Reading from the N-terminus, the 467-residue chain is Argininosuccinate lyase (467 aa).

Belongs to the lyase 1 family. Argininosuccinate lyase subfamily.

It is found in the cytoplasm. The catalysed reaction is 2-(N(omega)-L-arginino)succinate = fumarate + L-arginine. Its pathway is amino-acid biosynthesis; L-arginine biosynthesis; L-arginine from L-ornithine and carbamoyl phosphate: step 3/3. This Chromohalobacter salexigens (strain ATCC BAA-138 / DSM 3043 / CIP 106854 / NCIMB 13768 / 1H11) protein is Argininosuccinate lyase.